Here is a 198-residue protein sequence, read N- to C-terminus: Putative mycofactocin biosynthesis transcriptional regulator MftR (198 aa).

In terms of domain architecture, HTH tetR-type spans 12 to 72; the sequence is STTPHHISDV…GDFSTHLAQL (61 aa). A DNA-binding region (H-T-H motif) is located at residues 35–54; sequence SVDDIARAAGIARRTLFRYY.

Its function is as follows. May regulate a gene cluster involved in mycofactocin expression. Mycofactocin is a conserved polypeptide that might serve as an electron carrier. The polypeptide is Putative mycofactocin biosynthesis transcriptional regulator MftR (mftR) (Mycobacterium tuberculosis (strain ATCC 25618 / H37Rv)).